Reading from the N-terminus, the 457-residue chain is BAG family molecular chaperone regulator 4 (457 aa).

Residues 1–20 are compositionally biased toward low complexity; the sequence is MSALRRSGYGPSDGPSYGRY. The interval 1-104 is disordered; that stretch reads MSALRRSGYG…PYPGYNSNYW (104 aa). Residue serine 7 is modified to Phosphoserine. Residues 31–48 show a composition bias toward pro residues; that stretch reads HVPPPLYPPLRPEPPQPP. An omega-N-methylarginine mark is found at arginine 41, arginine 54, arginine 108, and arginine 185. Disordered regions lie at residues 128–335 and 348–374; these read LNSY…SDLL and YGNASSEHPSNQVPSNNLPEECFSSDE. Positions 160–193 are enriched in polar residues; the sequence is YTQSNYSTEVPNTYRSPGNSPTPMSRWMYSQQDC. The span at 255 to 268 shows a compositional bias: low complexity; sequence PWPSAAPSAPSAGS. Over residues 284–295 the composition is skewed to pro residues; it reads PQPPPSPPPQQP. Composition is skewed to polar residues over residues 326 to 335 and 348 to 365; these read AVNNDNSDLL and YGNASSEHPSNQVPSNNL. Positions 379-456 constitute a BAG domain; that stretch reads SIKKIIHVLE…AILEKLEKKG (78 aa).

As to quaternary structure, binds to the ATPase domain of HSP/HSC70 chaperones. Binds to the death domain of TNFRSF12. Binds to the death domain of TNFRSF1A in the absence of TNF and thereby prevents binding of adapter molecules such as TRADD or TRAF2. Interacts with PRKN.

The protein localises to the cytoplasm. In terms of biological role, inhibits the chaperone activity of HSP70/HSC70 by promoting substrate release. Prevents constitutive TNFRSF1A signaling. Negative regulator of PRKN translocation to damaged mitochondria. The sequence is that of BAG family molecular chaperone regulator 4 (Bag4) from Mus musculus (Mouse).